Reading from the N-terminus, the 594-residue chain is Arginine--tRNA ligase (594 aa).

Positions 139–149 (ANPTGPLHVGH) match the 'HIGH' region motif.

Belongs to the class-I aminoacyl-tRNA synthetase family. As to quaternary structure, monomer.

The protein localises to the cytoplasm. The catalysed reaction is tRNA(Arg) + L-arginine + ATP = L-arginyl-tRNA(Arg) + AMP + diphosphate. This Paraburkholderia phymatum (strain DSM 17167 / CIP 108236 / LMG 21445 / STM815) (Burkholderia phymatum) protein is Arginine--tRNA ligase.